The chain runs to 249 residues: Sec-independent protein translocase protein TatC (249 aa).

6 consecutive transmembrane segments (helical) span residues 18–38 (VSVG…KNIF), 69–89 (AIVI…APGL), 96–116 (VILP…AFSY), 151–171 (LILG…LAKV), 187–207 (IVVI…SQIF), and 208–228 (MALP…MVNP).

Belongs to the TatC family. In terms of assembly, the Tat system comprises two distinct complexes: a TatABC complex, containing multiple copies of TatA, TatB and TatC subunits, and a separate TatA complex, containing only TatA subunits. Substrates initially bind to the TatABC complex, which probably triggers association of the separate TatA complex to form the active translocon.

The protein resides in the cell inner membrane. In terms of biological role, part of the twin-arginine translocation (Tat) system that transports large folded proteins containing a characteristic twin-arginine motif in their signal peptide across membranes. Together with TatB, TatC is part of a receptor directly interacting with Tat signal peptides. This chain is Sec-independent protein translocase protein TatC, found in Helicobacter pylori (strain J99 / ATCC 700824) (Campylobacter pylori J99).